The sequence spans 465 residues: Ribosomal oxygenase 2 (465 aa).

The region spanning 139 to 271 (QPQRFKDELW…NSWGDYLLDS (133 aa)) is the JmjC domain. 3 residues coordinate Fe cation: histidine 179, aspartate 181, and histidine 240. Serine 309 carries the post-translational modification Phosphoserine.

This sequence belongs to the ROX family. MINA53 subfamily. It depends on Fe(2+) as a cofactor.

The protein localises to the nucleus. The protein resides in the nucleolus. The catalysed reaction is L-histidyl-[ribosomal protein uL15] + 2-oxoglutarate + O2 = (3S)-3-hydroxy-L-histidyl-[ribosomal protein uL15] + succinate + CO2. It carries out the reaction L-histidyl-[protein] + 2-oxoglutarate + O2 = (3S)-3-hydroxy-L-histidyl-[protein] + succinate + CO2. In terms of biological role, oxygenase that can act as both a histone lysine demethylase and a ribosomal histidine hydroxylase. Is involved in the demethylation of trimethylated 'Lys-9' on histone H3 (H3K9me3), leading to an increase in ribosomal RNA expression. Also catalyzes the hydroxylation of 60S ribosomal protein L27a on 'His-39'. May play an important role in cell growth and survival. May be involved in ribosome biogenesis, most likely during the assembly process of pre-ribosomal particles. The polypeptide is Ribosomal oxygenase 2 (Rattus norvegicus (Rat)).